A 707-amino-acid polypeptide reads, in one-letter code: MLTPTVRKFQYGQHTVTLETGMMARQATAAVMVTMDDTAVFVTVVGAKKAREGQDFFPLTVNYQERAYAAGRFPGGFFRREGRPGEGETLTARLIDRPIRPLFPEGFLNEVQVVATVVSVNPQVSPDIVAMIGASAALSLSGIPFNGPIGAARVGYINDQYVLNPTQDELKQSRLDLVVAGTDNAVLMVESEADLLSEDQMLGAVVFGHEQQQIVIENIKALAAEVGKPRWEWHAPEVNVALQRRVAEMAEARLGEAYHITEKQARYAKVDEIKESVIADLLAEDDALDAGEISDILGALEKAVVRGRVLRGEPRIDGREKDMIRALDVRTGVLPRTHGSALFTRGETQALVTATLGTERDAQNIDELMGERTDRFLLHYNFPPYSVGETGMMGSPKRREIGHGRLAKRGVLAVMPSQDAFPYTVRVVSEITESNGSSSMASVCGASLALMDAGVPIKAAVAGIAMGLVKEQDNFVVLSDILGDEDHLGDMDFKVAGSRDGVTALQMDIKIEGITREIMQVALNQAKGARLHILGVMEQAINAPRGDISEFAPRIHTIKINPEKIKDVIGKGGSVIRALTEETGTTIEIEDDGTVKIAATDGDKAKHAIRRIEEITAEIEVGRIYQGKVTRIVDFGAFVAIGGGKEGLVHISQIADKRVEKVTDYLQMGQEVAVKVLEVDRQGRVRLSIKEANASAAAGQDAPTDAE.

Residues Asp-486 and Asp-492 each contribute to the Mg(2+) site. The 60-residue stretch at Pro-553–Ile-612 folds into the KH domain. The S1 motif domain maps to Gly-622 to Lys-690.

This sequence belongs to the polyribonucleotide nucleotidyltransferase family. In terms of assembly, component of the RNA degradosome, which is a multiprotein complex involved in RNA processing and mRNA degradation. Requires Mg(2+) as cofactor.

The protein resides in the cytoplasm. It carries out the reaction RNA(n+1) + phosphate = RNA(n) + a ribonucleoside 5'-diphosphate. Functionally, involved in mRNA degradation. Catalyzes the phosphorolysis of single-stranded polyribonucleotides processively in the 3'- to 5'-direction. The protein is Polyribonucleotide nucleotidyltransferase of Edwardsiella ictaluri (strain 93-146).